The following is a 143-amino-acid chain: Late embryogenesis abundant protein 1 (143 aa).

Residues 1–17 (MSSQQNQNRQGEQQEQG) are compositionally biased toward low complexity. The segment at 1-143 (MSSQQNQNRQ…QAGEKVKGRD (143 aa)) is disordered. 4 repeat units span residues 47 to 57 (KTAEFRDSAGE), 69 to 79 (KGQEFKERAGE), 80 to 90 (KAEETKQRAGE), and 91 to 101 (KMDETKQRAGE). Composition is skewed to basic and acidic residues over residues 47 to 60 (KTAE…ETIR) and 69 to 143 (KGQE…KGRD). Residues 47-101 (KTAEFRDSAGETIRDLTGQAQEKGQEFKERAGEKAEETKQRAGEKMDETKQRAGE) are 4 X 11 AA approximate repeats.

Belongs to the LEA type 4 family.

In terms of biological role, may be involved in defense against water stress. The polypeptide is Late embryogenesis abundant protein 1 (Aphelenchoides avenae (Mycophagous nematode worm)).